The sequence spans 168 residues: Urease accessory protein UreE (168 aa).

The tract at residues 145 to 168 (EGGAYAAGQGGGHGPHGQHTHPHH) is disordered.

The protein belongs to the UreE family.

Its subcellular location is the cytoplasm. In terms of biological role, involved in urease metallocenter assembly. Binds nickel. Probably functions as a nickel donor during metallocenter assembly. In Verminephrobacter eiseniae (strain EF01-2), this protein is Urease accessory protein UreE.